Here is a 177-residue protein sequence, read N- to C-terminus: Late embryogenesis abundant protein 1 (177 aa).

Positions 1 to 177 (MASHDQSYKA…DKDHFPTNRH (177 aa)) are disordered. A compositionally biased stretch (basic and acidic residues) spans 28–39 (IEDKAQAAKEKA). The span at 40–89 (QQAAQTAKDKTSQTAQAAKEKTQQTAQAAKEKTQQTAQAAKDETQQTAQA) shows a compositional bias: low complexity. A run of 4 repeats spans residues 53–63 (TAQAAKEKTQQ), 64–74 (TAQAAKEKTQQ), 75–85 (TAQAAKDETQQ), and 86–96 (TAQAAKDKTQQ). Residues 53 to 96 (TAQAAKEKTQQTAQAAKEKTQQTAQAAKDETQQTAQAAKDKTQQ) are 4 X 11 AA approximate tandem repeats of T-A-Q-A-A-K-E-K-T-Q-Q. Positions 90–117 (AKDKTQQTTEATKEKAQDTTGRAREKGS) are enriched in basic and acidic residues. Polar residues predominate over residues 119–142 (MGQSTKETAQSGKDNSAGFLQQTG). Positions 164–177 (NDDKDKDHFPTNRH) are enriched in basic and acidic residues.

This sequence belongs to the LEA type 4 family. In terms of tissue distribution, highest expression is found in seeds. No expression detected in adult tissues.

The chain is Late embryogenesis abundant protein 1 from Cicer arietinum (Chickpea).